The primary structure comprises 323 residues: Chitin-binding lectin 1 (323 aa).

The N-terminal stretch at 1–22 (MKETAISVLALLTLFLLEVVSA) is a signal peptide. 4-hydroxyproline is present on residues P50, P51, P53, and P55. P50, P51, P53, and P55 each carry an O-linked (Ara...) hydroxyproline glycan. Chitin-binding type-1 domains follow at residues 58 to 101 (YPQC…QCPG) and 105 to 149 (EGRC…QCKL). 8 disulfide bridges follow: C61-C77, C70-C83, C76-C90, C95-C99, C108-C125, C117-C131, C124-C138, and C143-C147. Chitin is bound by residues S78, W80, W82, and Y89. An extensin-like region spans residues 150–210 (PSPPPPPPPP…PPPPPPALPY (61 aa)). A glycan (O-linked (Gal) serine) is linked at S151. 10 consecutive repeat copies span residues 151-159 (SPPPPPPPP), 160-164 (SPPPP), 165-167 (SPP), 168-172 (SPPPP), 173-180 (SPPPPPPP), 181-185 (SPPPP), 186-190 (SPPPP), 191-192 (SP), 193-198 (SPPPPP), and 200-206 (SPPPPPP). Residues 151-206 (SPPPPPPPPSPPPPSPPSPPPPSPPPPPPPSPPPPSPPPPSPSPPPPPASPPPPPP) form a 10 X approximate repeats of S-P-P-P-P region. 8 positions are modified to 4-hydroxyproline: P152, P153, P154, P155, P156, P157, P158, and P159. P152, P153, P154, P155, P156, P157, P158, and P159 each carry an O-linked (Ara...) hydroxyproline glycan. The disordered stretch occupies residues 154–203 (PPPPPPSPPPPSPPSPPPPSPPPPPPPSPPPPSPPPPSPSPPPPPASPPP). An O-linked (Gal) serine glycan is attached at S160. 4-hydroxyproline occurs at positions 161, 162, 163, and 164. O-linked (Ara...) hydroxyproline glycans are attached at residues P161, P162, P163, and P164. S165 carries an O-linked (Gal) serine glycan. A 4-hydroxyproline mark is found at P166 and P167. P166 and P167 each carry an O-linked (Ara...) hydroxyproline glycan. Residue S168 is glycosylated (O-linked (Gal) serine). 4 positions are modified to 4-hydroxyproline: P169, P170, P171, and P172. Residues P169, P170, P171, and P172 are each glycosylated (O-linked (Ara...) hydroxyproline). O-linked (Gal) serine glycosylation is present at S173. A 4-hydroxyproline mark is found at P174, P175, P176, P177, P178, P179, and P180. Residues P174, P175, P176, P177, P178, P179, and P180 are each glycosylated (O-linked (Ara...) hydroxyproline). A glycan (O-linked (Gal) serine) is linked at S181. A 4-hydroxyproline mark is found at P182, P183, P184, and P185. O-linked (Ara...) hydroxyproline glycans are attached at residues P182, P183, P184, and P185. O-linked (Gal) serine glycosylation occurs at S186. P187, P188, P189, and P190 each carry 4-hydroxyproline. P187, P188, P189, and P190 each carry an O-linked (Ara...) hydroxyproline glycan. Residue S191 is glycosylated (O-linked (Gal) serine). P192 bears the 4-hydroxyproline mark. P192 carries an O-linked (Ara...) hydroxyproline glycan. A glycan (O-linked (Gal) serine) is linked at S193. 4-hydroxyproline occurs at positions 194, 195, 196, 197, and 198. O-linked (Ara...) hydroxyproline glycosylation is found at P194, P195, P196, P197, and P198. An O-linked (Gal) serine glycan is attached at S200. 7 positions are modified to 4-hydroxyproline: P201, P202, P203, P204, P205, P206, and P209. O-linked (Ara...) hydroxyproline glycans are attached at residues P201, P202, P203, P204, P205, P206, and P209. Chitin-binding type-1 domains are found at residues 210-253 (YPQC…QCPG) and 257-301 (EGRC…QCNT). 8 disulfides stabilise this stretch: C213-C229, C222-C235, C228-C242, C247-C251, C260-C277, C269-C283, C276-C290, and C295-C299. Residues S230, W232, W234, and Y241 each contribute to the chitin site.

This sequence in the central section; belongs to the extensin family. Homodimer. Heavily glycosylated with beta-arabinose on hydroxyprolines and with alpha-galactose on serines of the extensin-like domain. As no other sugars could be detected in the native lectin, it is unlikely that the three putative N-glycosylation sites are actually glycosylated. In terms of processing, the N-terminus is blocked. The N-terminal sequences proposed in PubMed:9022287 and PubMed:11056399 originate probably from truncated proteins.

In terms of biological role, this protein might function as a defense against chitin containing pathogens. Binds to several branched or linear N-acetyllactosamine-containing glycosphingolipids and also to lactosylceramide with sphingosine and non-hydroxy fatty acids. The chain is Chitin-binding lectin 1 from Solanum tuberosum (Potato).